A 196-amino-acid polypeptide reads, in one-letter code: Protein LIGHT-DEPENDENT SHORT HYPOCOTYLS 6 (196 aa).

The segment covering 1–16 (MESADSGRSDPVKGDD) has biased composition (basic and acidic residues). 2 disordered regions span residues 1–36 (MESA…ESQK) and 149–196 (ARGI…AVPP). One can recognise an ALOG domain in the interval 31-158 (RYESQKRRDW…ARGIPYEKKK (128 aa)). The short motif at 156–160 (KKKRK) is the Nuclear localization signal element.

The protein belongs to the plant homeotic and developmental regulators ALOG protein family.

The protein localises to the nucleus. Functionally, probable transcription regulator that acts as a developmental regulator by promoting cell growth in response to light. This chain is Protein LIGHT-DEPENDENT SHORT HYPOCOTYLS 6 (LSH6), found in Arabidopsis thaliana (Mouse-ear cress).